Reading from the N-terminus, the 77-residue chain is Small ribosomal subunit protein bS20 (77 aa).

The tract at residues 47–77 (ASSSIDKAESKGLIHKNKASRDKARLAAKLG) is disordered.

Belongs to the bacterial ribosomal protein bS20 family.

Its function is as follows. Binds directly to 16S ribosomal RNA. This is Small ribosomal subunit protein bS20 from Streptococcus pyogenes serotype M1.